The sequence spans 171 residues: Cytochrome c-type biogenesis protein CcmE (171 aa).

Residues 1–7 lie on the Cytoplasmic side of the membrane; sequence MNRKQKR. A helical; Signal-anchor for type II membrane protein transmembrane segment spans residues 8–28; it reads LAVIAGGMGFIAAAVLLVMFA. At 29–171 the chain is on the periplasmic side; that stretch reads FSQSVAYFYM…NPGEEAKATQ (143 aa). Residues histidine 124 and tyrosine 128 each coordinate heme. The tract at residues 132–171 is disordered; that stretch reads DVADRLKQQGLWKEGQGGQESPGKEGQGQENPGEEAKATQ.

Belongs to the CcmE/CycJ family.

The protein localises to the cell inner membrane. Its function is as follows. Heme chaperone required for the biogenesis of c-type cytochromes. Transiently binds heme delivered by CcmC and transfers the heme to apo-cytochromes in a process facilitated by CcmF and CcmH. In Rhizobium leguminosarum bv. trifolii (strain WSM2304), this protein is Cytochrome c-type biogenesis protein CcmE.